The following is a 457-amino-acid chain: MADS-box transcription factor 1 (457 aa).

The 61-residue stretch at 11–71 (PSSPRRSIQR…NACHVYSSEE (61 aa)) folds into the MADS-box domain. Disordered stretches follow at residues 195–278 (SGDY…SRLH) and 295–328 (SSGY…LGQE). Positions 199 to 216 (SDSPLEPSSSSSFSVPPE) are enriched in low complexity. Positions 218–234 (LNPTLSFQHNDVPQTDN) are enriched in polar residues. The span at 265-278 (KNRRNGKPRISRLH) shows a compositional bias: basic residues. Residues 295–317 (SSGYLDPSSTPITPLDSAINQIT) are compositionally biased toward polar residues. Residue Ser372 is modified to Phosphoserine.

Post-translationally, phosphorylated. Occurs periodically during mitosis.

Its subcellular location is the nucleus. In terms of biological role, acts as a transcriptional activator with a role in the regulation of mitosis. Regulates septation and the periodic transcription of cdc15. In Schizosaccharomyces pombe (strain 972 / ATCC 24843) (Fission yeast), this protein is MADS-box transcription factor 1 (mbx1).